Here is a 291-residue protein sequence, read N- to C-terminus: Pyridoxal 5'-phosphate synthase subunit PdxS (291 aa).

Asp-23 lines the D-ribose 5-phosphate pocket. Lys-80 serves as the catalytic Schiff-base intermediate with D-ribose 5-phosphate. Gly-152 contacts D-ribose 5-phosphate. Arg-164 is a binding site for D-glyceraldehyde 3-phosphate. D-ribose 5-phosphate is bound by residues Gly-213 and 234–235 (GS).

Belongs to the PdxS/SNZ family. In terms of assembly, in the presence of PdxT, forms a dodecamer of heterodimers.

The catalysed reaction is aldehydo-D-ribose 5-phosphate + D-glyceraldehyde 3-phosphate + L-glutamine = pyridoxal 5'-phosphate + L-glutamate + phosphate + 3 H2O + H(+). Its pathway is cofactor biosynthesis; pyridoxal 5'-phosphate biosynthesis. In terms of biological role, catalyzes the formation of pyridoxal 5'-phosphate from ribose 5-phosphate (RBP), glyceraldehyde 3-phosphate (G3P) and ammonia. The ammonia is provided by the PdxT subunit. Can also use ribulose 5-phosphate and dihydroxyacetone phosphate as substrates, resulting from enzyme-catalyzed isomerization of RBP and G3P, respectively. This chain is Pyridoxal 5'-phosphate synthase subunit PdxS, found in Streptococcus pneumoniae (strain P1031).